The chain runs to 81 residues: Small ribosomal subunit protein bS16 (81 aa).

The protein belongs to the bacterial ribosomal protein bS16 family.

The protein is Small ribosomal subunit protein bS16 of Lachnoclostridium phytofermentans (strain ATCC 700394 / DSM 18823 / ISDg) (Clostridium phytofermentans).